A 488-amino-acid chain; its full sequence is MIPVVALVGRPNVGKSTLFNRLTRTRDALVADYPGLTRDRKYGRAHLSGYEFIVVDTGGIDGTEEGIETKMAEQSLAAIEEADVVLFMTDARAGLTAADLAIAQHLRSRDKITFVVANKVDGIDADSACGEFWQLGLGEVYQMAAAQGRGVTGLVEYALAPFAEAMGLVRDDDGEVVTDERNYTEEEAEAEQQRLAEQPIKLAIIGKPNVGKSTLTNRILGEERVVVYDQPGTTRDSVYIPMERDGRNYVLIDTAGVRRRARVHEVIEKFSVIKTLKAVEDSNVVLLVIDAHEGIAEQDLGLLGFVLNSGRALVLAVNKWDGLDQDVKDRVKTELDRRLGFIDFARIHFISALHGTGVGHLFESIEEAYDSATRRVSTSMLTRIMQMAQDDHQPPMVNGRRVKLKYAHVGGYNPPIVVVHGNQVSRLPDSYKRYMMNYYRRALKVVGTPIQLRFHEGDNPFEGRKEKLTLSQERRRKRMMSHIKSKKA.

EngA-type G domains lie at 3 to 166 (PVVA…AEAM) and 200 to 373 (IKLA…DSAT). GTP contacts are provided by residues 9–16 (GRPNVGKS), 56–60 (DTGGI), 118–121 (NKVD), 206–213 (GKPNVGKS), 253–257 (DTAGV), and 318–321 (NKWD). One can recognise a KH-like domain in the interval 374-458 (RRVSTSMLTR…PIQLRFHEGD (85 aa)).

Belongs to the TRAFAC class TrmE-Era-EngA-EngB-Septin-like GTPase superfamily. EngA (Der) GTPase family. In terms of assembly, associates with the 50S ribosomal subunit.

Its function is as follows. GTPase that plays an essential role in the late steps of ribosome biogenesis. The polypeptide is GTPase Der (Shewanella amazonensis (strain ATCC BAA-1098 / SB2B)).